A 140-amino-acid chain; its full sequence is UPF0299 membrane protein CGSHiGG_01475 (140 aa).

The next 4 membrane-spanning stretches (helical) occupy residues 1–21 (MIQKLFLLVRSLVILSIMLYL), 33–52 (VPGSIWGLLLLFLGLTTRVI), 60–80 (GASLLIRFMAVLFVPVSVGII), and 92–112 (ILLVPNIVSTCVTLLVIGFLG).

This sequence belongs to the UPF0299 family.

It localises to the cell inner membrane. The protein is UPF0299 membrane protein CGSHiGG_01475 of Haemophilus influenzae (strain PittGG).